A 346-amino-acid polypeptide reads, in one-letter code: Senescence-specific cysteine protease SAG12 (346 aa).

A signal peptide spans methionine 1–serine 25. Residue asparagine 124 is glycosylated (N-linked (GlcNAc...) asparagine). 3 disulfide bridges follow: cysteine 151/cysteine 192, cysteine 185/cysteine 225, and cysteine 283/cysteine 335. Cysteine 154 is a catalytic residue. Histidine 289 is an active-site residue. A glycan (N-linked (GlcNAc...) asparagine) is linked at asparagine 301. The active site involves asparagine 310.

Belongs to the peptidase C1 family. As to expression, found in senescent leaves, especially in senescence-associated vacuoles- (SAVs) containing cells (e.g. mesophyll and guard cells), and in senescencing ovules of unfertilised pistils.

The protein localises to the vacuole. In terms of biological role, cysteine protease that may have a developmental senescence specific cell death function during apoptosis, heavy metal detoxification, and hypersensitive response. The protein is Senescence-specific cysteine protease SAG12 of Arabidopsis thaliana (Mouse-ear cress).